The sequence spans 221 residues: Large ribosomal subunit protein uL3 (221 aa).

It belongs to the universal ribosomal protein uL3 family. In terms of assembly, part of the 50S ribosomal subunit. Forms a cluster with proteins L14 and L19.

Functionally, one of the primary rRNA binding proteins, it binds directly near the 3'-end of the 23S rRNA, where it nucleates assembly of the 50S subunit. In Chlamydia abortus (strain DSM 27085 / S26/3) (Chlamydophila abortus), this protein is Large ribosomal subunit protein uL3.